We begin with the raw amino-acid sequence, 60 residues long: Metallothionein B (60 aa).

Positions Met-1 to Cys-28 are beta. Residues Cys-4, Cys-6, Cys-12, Cys-14, Cys-18, Cys-20, Cys-23, Cys-25, Cys-28, Cys-32, Cys-33, Cys-35, Cys-36, Cys-40, Cys-43, Cys-47, Cys-49, Cys-54, Cys-58, and Cys-59 each coordinate a divalent metal cation. The alpha stretch occupies residues Lys-29–Gln-60.

This sequence belongs to the metallothionein superfamily. Type 1 family.

Its function is as follows. Metallothioneins have a high content of cysteine residues that bind various heavy metals. The polypeptide is Metallothionein B (mtb) (Chaenocephalus aceratus (Blackfin icefish)).